The sequence spans 397 residues: Potassium channel subfamily K member 4 (397 aa).

The Cytoplasmic portion of the chain corresponds to 1–3; that stretch reads MRS. Residues 4 to 24 traverse the membrane as a helical segment; it reads TTLLALLALVLLYLVSGALVF. The Extracellular segment spans residues 25–88; sequence QALEQPHEQQ…WTNSSNHSSA (64 aa). N-linked (GlcNAc...) asparagine glycosylation occurs at N81. Positions 89-103 form an intramembrane region, helical; sequence WNLGSAFFFSGTIIT. Residues T104, I105, G106, and Y107 each contribute to the K(+) site. The segment at 104 to 109 is selectivity filter 1; that stretch reads TIGYGN. Residues 104–110 lie within the membrane without spanning it; the sequence is TIGYGNI. Residues 111 to 118 are Extracellular-facing; the sequence is ALHTDAGR. Residues 119-151 traverse the membrane as a helical segment; it reads LFCIFYALVGIPLFGMLLAGVGDRLGSSLRRGI. The Cytoplasmic segment spans residues 152–173; the sequence is GHIEAVFLKWHVPPGLVRMLSA. A helical transmembrane segment spans residues 174-195; the sequence is VLFLLIGCLLFVLTPTFVFSYM. Topologically, residues 196–200 are extracellular; the sequence is ESWSK. The segment at residues 201–214 is an intramembrane region (helical); sequence LEAIYFVIVTLTTV. 4 residues coordinate K(+): T213, V214, G215, and F216. A selectivity filter 2 region spans residues 213-218; the sequence is TVGFGD. An intramembrane segment occupies 215-220; the sequence is GFGDYV. Over 221-234 the chain is Extracellular; sequence PGDGTGQNSPAYQP. A helical transmembrane segment spans residues 235–261; it reads LVWFWILFGLAYFASVLTTIGNWLRAV. At 262–397 the chain is on the cytoplasmic side; it reads SRRTRAEMGG…GRLRDKAVPV (136 aa). A compositionally biased stretch (polar residues) spans 282-292; the sequence is TVTARVTQRTG. The tract at residues 282 to 397 is disordered; the sequence is TVTARVTQRT…GRLRDKAVPV (116 aa). The span at 369–388 shows a compositional bias: basic residues; sequence PRGRRRPNPTKKPSRPRGPG.

This sequence belongs to the two pore domain potassium channel (TC 1.A.1.8) family. In terms of assembly, homodimer; disulfide-linked. Forms heterodimers with other 2-pore domain K(+) channel subunits, such as KCNK2 and KCNK10. In terms of tissue distribution, detected in brain, and at much lower levels in liver, skeletal muscle and testis.

It is found in the cell membrane. The protein resides in the cell projection. Its subcellular location is the axon. The enzyme catalyses K(+)(in) = K(+)(out). The catalysed reaction is Rb(+)(in) = Rb(+)(out). It catalyses the reaction Cs(+)(in) = Cs(+)(out). With respect to regulation, activated by various stimuli including intracellular basic pH, mechanical stretch and heat and polyunsaturated fatty acids such as arachidonic acid. Its function is as follows. K(+) channel that conducts voltage-dependent outward rectifying currents upon membrane depolarization. Voltage sensing is coupled to K(+) electrochemical gradient in an 'ion flux gating' mode where outward but not inward ion flow opens the gate. Converts to voltage-independent 'leak' conductance mode upon stimulation by various stimuli including mechanical membrane stretch, basic pH, heat and lipids. Homo- and heterodimerizes to form functional channels with distinct regulatory and gating properties. At trigeminal A-beta afferent nerves, the heterodimer of KCNK2/TREK-1 and KCNK4/TRAAK is mostly coexpressed at nodes of Ranvier where it conducts voltage-independent mechanosensitive and thermosensitive currents, allowing rapid action potential repolarization, high speed and high frequence saltatory conduction on myelinated nerves to ensure prompt sensory responses. Permeable to other monovalent cations such as Rb(+) and Cs(+). The chain is Potassium channel subfamily K member 4 from Rattus norvegicus (Rat).